Consider the following 272-residue polypeptide: U11/U12 small nuclear ribonucleoprotein 35 kDa protein (272 aa).

Positions 51–129 (LTLFVSRLSP…REVFVDFELE (79 aa)) constitute an RRM domain. 2 stretches are compositionally biased toward basic and acidic residues: residues 146 to 162 (GKKESGQLRFGGRDRPF) and 190 to 272 (RDRS…EHNR). Positions 146–272 (GKKESGQLRF…RKHRSDEHNR (127 aa)) are disordered. A coiled-coil region spans residues 221 to 258 (TKDDKEQNAEHTKRERSREQAKNDKDKEKKDSKRERSR).

The protein resides in the nucleus. The chain is U11/U12 small nuclear ribonucleoprotein 35 kDa protein (snrnp35) from Xenopus laevis (African clawed frog).